The following is an 823-amino-acid chain: Apoptosis-resistant E3 ubiquitin protein ligase 1 (823 aa).

The Filamin repeat unit spans residues 52-158; the sequence is GNYLDPRSCK…VAYSPYYKIF (107 aa). The segment at 315–345 is disordered; sequence PPMHMTSSQRRPSTAVDEEDEDSPSECHTPE. The interaction with SOCS2 stretch occupies residues 483–789; that stretch reads SISDWSKNFE…THSTLPTAHT (307 aa). In terms of domain architecture, HECT spans 483–823; it reads SISDWSKNFE…SEGCEGFGML (341 aa). Residue Cys-790 is the Glycyl thioester intermediate of the active site.

In terms of assembly, interacts with SOCS2. Interacts (via HECT domain) with HTRA2, DIABLO/SMAC and SEPTIN4; in the cytoplasm following induction of apoptosis. Autoubiquitinated in vitro in the presence of E2 enzyme UBE2D1/UBCH5A.

It carries out the reaction S-ubiquitinyl-[E2 ubiquitin-conjugating enzyme]-L-cysteine + [acceptor protein]-L-lysine = [E2 ubiquitin-conjugating enzyme]-L-cysteine + N(6)-ubiquitinyl-[acceptor protein]-L-lysine.. It participates in protein modification; protein ubiquitination. In terms of biological role, E3 ubiquitin-protein ligase that catalyzes 'Lys-11'- or 'Lys-33'-linked polyubiquitin chains, with some preference for 'Lys-33' linkages. E3 ubiquitin-protein ligases accept ubiquitin from an E2 ubiquitin-conjugating enzyme in the form of a thioester and then directly transfers the ubiquitin to targeted substrates. Ubiquitinates SEPTIN4, DIABLO/SMAC and HTRA2 in vitro. Modulates pulmonary inflammation by targeting SOCS2 for ubiquitination and subsequent degradation by the proteasome. The protein is Apoptosis-resistant E3 ubiquitin protein ligase 1 of Homo sapiens (Human).